The primary structure comprises 307 residues: 2-dehydropantoate 2-reductase (307 aa).

Residues 7-12 (GSGAMG), N102, and A128 each bind NADP(+). Residue N102 coordinates substrate. The active-site Proton donor is K184. Positions 188, 192, and 255 each coordinate substrate. E268 is a binding site for NADP(+).

The protein belongs to the ketopantoate reductase family.

Its subcellular location is the cytoplasm. The enzyme catalyses (R)-pantoate + NADP(+) = 2-dehydropantoate + NADPH + H(+). Its pathway is cofactor biosynthesis; (R)-pantothenate biosynthesis; (R)-pantoate from 3-methyl-2-oxobutanoate: step 2/2. In terms of biological role, catalyzes the NADPH-dependent reduction of ketopantoate into pantoic acid. The chain is 2-dehydropantoate 2-reductase (apbA) from Streptococcus pyogenes serotype M1.